A 41-amino-acid chain; its full sequence is MMKRLIVLVLLASTLLTGCNTARGFGEDIKHLGNSISRAAS.

A signal peptide spans 1 to 18 (MMKRLIVLVLLASTLLTG). The N-palmitoyl cysteine moiety is linked to residue C19. C19 carries the S-diacylglycerol cysteine lipid modification.

It belongs to the EcnA/EcnB lipoprotein family.

It is found in the cell membrane. Its function is as follows. Acts as antidote to the effect of entericidin B. The protein is Entericidin A (ecnA) of Escherichia coli O157:H7.